Consider the following 607-residue polypeptide: Elongation factor 4 (607 aa).

The 183-residue stretch at 11–193 (SKIRNFSIIA…QIVEKVPAPT (183 aa)) folds into the tr-type G domain. Residues 23-28 (DHGKST) and 140-143 (NKID) contribute to the GTP site.

Belongs to the TRAFAC class translation factor GTPase superfamily. Classic translation factor GTPase family. LepA subfamily.

It is found in the cell membrane. The enzyme catalyses GTP + H2O = GDP + phosphate + H(+). Its function is as follows. Required for accurate and efficient protein synthesis under certain stress conditions. May act as a fidelity factor of the translation reaction, by catalyzing a one-codon backward translocation of tRNAs on improperly translocated ribosomes. Back-translocation proceeds from a post-translocation (POST) complex to a pre-translocation (PRE) complex, thus giving elongation factor G a second chance to translocate the tRNAs correctly. Binds to ribosomes in a GTP-dependent manner. The polypeptide is Elongation factor 4 (Bacillus anthracis (strain A0248)).